A 301-amino-acid chain; its full sequence is Mycothiol acetyltransferase (301 aa).

N-acetyltransferase domains lie at 6–151 and 153–301; these read EWRQ…ILRD and VSLR…QYGR. Position 79-81 (79-81) interacts with acetyl-CoA; it reads LFV. 1D-myo-inositol 2-(L-cysteinylamino)-2-deoxy-alpha-D-glucopyranoside-binding residues include glutamate 180, lysine 219, and glutamate 235. Acetyl-CoA contacts are provided by residues 239-241 and 246-252; these read VGV and QGGGLGR. Residue tyrosine 273 participates in 1D-myo-inositol 2-(L-cysteinylamino)-2-deoxy-alpha-D-glucopyranoside binding.

The protein belongs to the acetyltransferase family. MshD subfamily. Monomer.

It carries out the reaction 1D-myo-inositol 2-(L-cysteinylamino)-2-deoxy-alpha-D-glucopyranoside + acetyl-CoA = mycothiol + CoA + H(+). In terms of biological role, catalyzes the transfer of acetyl from acetyl-CoA to desacetylmycothiol (Cys-GlcN-Ins) to form mycothiol. In Amycolatopsis mediterranei (strain U-32), this protein is Mycothiol acetyltransferase.